A 2363-amino-acid polypeptide reads, in one-letter code: Highly reducing polyketide synthase cnsI (2363 aa).

The 427-residue stretch at 14 to 440 (PEPIAIIGMS…GSNAHAIVES (427 aa)) folds into the Ketosynthase family 3 (KS3) domain. Residues Cys-187, His-322, and His-363 each act as for beta-ketoacyl synthase activity in the active site. The tract at residues 546–854 (LAFVFTGQGA…FLQVLKSINA (309 aa)) is malonyl-CoA:ACP transacylase (MAT) domain. Ser-638 serves as the catalytic For malonyltransferase activity. Positions 938–1068 (HDLLGSPMDF…GTFTLHYDAR (131 aa)) are N-terminal hotdog fold. The segment at 938–1224 (HDLLGSPMDF…RLDSIASDVS (287 aa)) is dehydratase (DH) domain. One can recognise a PKS/mFAS DH domain in the interval 938–1246 (HDLLGSPMDF…LGPVPMSKVP (309 aa)). Residue His-970 is the Proton acceptor; for dehydratase activity of the active site. A C-terminal hotdog fold region spans residues 1089-1246 (TAECETNRDA…LGPVPMSKVP (158 aa)). Asp-1159 (proton donor; for dehydratase activity) is an active-site residue. The interval 1669–1976 (GGQWVEDRQL…ARQTGISVAI (308 aa)) is enoylreductase (ER) domain. The interval 2001 to 2177 (TYLLAGGLGM…PGHSIDIGLV (177 aa)) is catalytic ketoreductase (KRc) domain. Residues 2279-2357 (EDASYVVNQA…VLSEKIAAQS (79 aa)) form the Carrier domain. Position 2317 is an O-(pantetheine 4'-phosphoryl)serine (Ser-2317).

It functions in the pathway alkaloid biosynthesis. Highly reducing polyketide synthase; part of the gene cluster that mediates the biosynthesis of communesins, a prominent class of indole alkaloids with great potential as pharmaceuticals. Communesins are biosynthesized by the coupling of tryptamine and aurantioclavine, two building blocks derived from L-tryptophan. The L-tryptophan decarboxylase cnsB converts L-tryptophan to tryptamine, whereas the tryptophan dimethylallyltransferase cnsF converts L-tryptophan to 4-dimethylallyl tryptophan which is further transformed to aurantioclavine by the aurantioclavine synthase cnsA, probably aided by the catalase cnsD. The cytochrome P450 monooxygenase cnsC catalyzes the heterodimeric coupling between the two different indole moieties, tryptamine and aurantioclavine, to construct vicinal quaternary stereocenters and yield the heptacyclic communesin scaffold. The O-methyltransferase cnsE then methylates the communesin scaffold to produce communesin K, the simplest characterized communesin that contains the heptacyclic core. The dioxygenase cnsJ converts communesin K into communesin I. Acylation to introduce the hexadienyl group at position N16 of communesin I by the acyltransferase cnsK leads to the production of communesin B. The hexadienyl group is produced by the highly reducing polyketide synthase cnsI, before being hydrolytically removed from cnsI by the serine hydrolase cnsH, converted into hexadienyl-CoA by the CoA ligase cnsG, and then transferred to communesin I by cnsK. Surprisingly, cnsK may also be a promiscuous acyltransferase that can tolerate a range of acyl groups, including acetyl-, propionyl-, and butyryl-CoA, which lead to communesins A, G and H respectively. The roles of the alpha-ketoglutarate-dependent dioxygenases cnsM and cnsP have still to be determined. The polypeptide is Highly reducing polyketide synthase cnsI (Penicillium expansum (Blue mold rot fungus)).